A 412-amino-acid polypeptide reads, in one-letter code: Phosphoglycerate kinase (412 aa).

Substrate contacts are provided by residues D24–N26, R40, H63–R66, R122, and R162. ATP is bound by residues K212, G300, E331, and G360–S363.

This sequence belongs to the phosphoglycerate kinase family. Monomer.

It localises to the cytoplasm. The enzyme catalyses (2R)-3-phosphoglycerate + ATP = (2R)-3-phospho-glyceroyl phosphate + ADP. The protein operates within carbohydrate degradation; glycolysis; pyruvate from D-glyceraldehyde 3-phosphate: step 2/5. This Mycobacterium bovis (strain ATCC BAA-935 / AF2122/97) protein is Phosphoglycerate kinase (pgk).